Consider the following 21-residue polypeptide: Azemiopsin (21 aa).

The span at 1–14 (DNWWPKPPHQGPRP) shows a compositional bias: pro residues. A disordered region spans residues 1 to 21 (DNWWPKPPHQGPRPPRPRPKP). Implicated in receptor binding regions lie at residues 3 to 6 (WWPK), 8 to 11 (PHQG), and 13 to 14 (RP).

In terms of assembly, monomer. As to expression, expressed by the venom gland.

The protein localises to the secreted. Functionally, in vitro, reversibly blocks human muscle-type nicotinic acetylcholine receptors (nAChR) alpha-1-beta-1-epsilon-delta/CHRNA1-CHRNB1-CHRNE-CHRND (EC(50)=0.44 uM) and alpha-1-beta-1-gamma-delta/CHRNA1-CHRNB1-CHRNG-CHRND (EC(50)=1.56 uM). Binds to nAChR from T.californica (IC(50)=0.03-0.18 uM), human neuronal nAChR alpha-7/CHRNA7 (IC(50)=22 uM) and acetylcholine-binding proteins (AChBP) from L.stagnalis (IC(50)=63 uM) and A.californica (IC(50)=230 uM). This Azemiops feae (Fea's viper) protein is Azemiopsin.